Reading from the N-terminus, the 354-residue chain is S-adenosylmethionine:tRNA ribosyltransferase-isomerase (354 aa).

The protein belongs to the QueA family. In terms of assembly, monomer.

The protein resides in the cytoplasm. It carries out the reaction 7-aminomethyl-7-carbaguanosine(34) in tRNA + S-adenosyl-L-methionine = epoxyqueuosine(34) in tRNA + adenine + L-methionine + 2 H(+). Its pathway is tRNA modification; tRNA-queuosine biosynthesis. Functionally, transfers and isomerizes the ribose moiety from AdoMet to the 7-aminomethyl group of 7-deazaguanine (preQ1-tRNA) to give epoxyqueuosine (oQ-tRNA). This chain is S-adenosylmethionine:tRNA ribosyltransferase-isomerase, found in Salmonella schwarzengrund (strain CVM19633).